The primary structure comprises 561 residues: Rho guanine nucleotide exchange factor 9 (561 aa).

In terms of domain architecture, SH3 spans 53-112 (DSIVSAEAVWDHVTMANRELAFKAGDVIKVLDASNKDWWWGQIDDEEGWFPASFVRLWVN). The interaction with GPHN stretch occupies residues 145–155 (RDQMRANVINE). The region spanning 148 to 332 (MRANVINEIM…RNVTQQINER (185 aa)) is the DH domain. The region spanning 363-470 (ELIYTGEMAW…WLRAFREERK (108 aa)) is the PH domain. Residues 499 to 524 (KQKGVNSARSVPPSYPPPQDPLNQGQ) are disordered. Phosphoserine is present on Ser547.

In terms of assembly, interacts with GPHN.

The protein localises to the cytoplasm. It localises to the postsynaptic density. Acts as a guanine nucleotide exchange factor (GEF) for CDC42. Promotes formation of GPHN clusters. This Bos taurus (Bovine) protein is Rho guanine nucleotide exchange factor 9 (ARHGEF9).